The primary structure comprises 571 residues: Exodeoxyribonuclease 1 (571 aa).

The N-domain stretch occupies residues 1 to 96 (MGIKGLLGLL…STEQKRKERR (96 aa)). Asp-30, Asp-78, Glu-150, Asp-152, Asp-171, Asp-173, and Asp-225 together coordinate Mg(2+). Residues 114–245 (QAIMQFSRCV…KTALRYLQKY (132 aa)) are I-domain. Disordered regions lie at residues 464-489 (KEIDEQVPSQSNNTTPTSAKSDSASP) and 530-559 (RKNHASLPSRRIVYKPPSSPSTPISMNPRP). A compositionally biased stretch (polar residues) spans 470–489 (VPSQSNNTTPTSAKSDSASP).

The protein belongs to the XPG/RAD2 endonuclease family. EXO1 subfamily. In terms of assembly, monomer. Mg(2+) serves as cofactor.

Its subcellular location is the nucleus. In terms of biological role, 5'-&gt;3' double-stranded DNA exonuclease that could act in a pathway that corrects mismatched base pairs. In Schizosaccharomyces pombe (strain 972 / ATCC 24843) (Fission yeast), this protein is Exodeoxyribonuclease 1 (exo1).